The chain runs to 101 residues: NADH-quinone oxidoreductase subunit K (101 aa).

A run of 3 helical transmembrane segments spans residues 5–25 (LTHYVVASGILFAIGLAGIIL), 30–50 (IVILMCLEIMLNAANLALVAF), and 61–81 (VLVFFVITVAAAEVAVGLALI).

This sequence belongs to the complex I subunit 4L family. As to quaternary structure, NDH-1 is composed of 14 different subunits. Subunits NuoA, H, J, K, L, M, N constitute the membrane sector of the complex.

Its subcellular location is the cell inner membrane. It carries out the reaction a quinone + NADH + 5 H(+)(in) = a quinol + NAD(+) + 4 H(+)(out). In terms of biological role, NDH-1 shuttles electrons from NADH, via FMN and iron-sulfur (Fe-S) centers, to quinones in the respiratory chain. The immediate electron acceptor for the enzyme in this species is believed to be ubiquinone. Couples the redox reaction to proton translocation (for every two electrons transferred, four hydrogen ions are translocated across the cytoplasmic membrane), and thus conserves the redox energy in a proton gradient. The polypeptide is NADH-quinone oxidoreductase subunit K (Methylacidiphilum infernorum (isolate V4) (Methylokorus infernorum (strain V4))).